The primary structure comprises 449 residues: MSDHDYDVVIIGGGPAGSTMASYLAKAGVKCAVFEKELFEREHVGESLVPATTPVLLEIGVMEKIEKANFPKKFGAAWTSADSGPEDKMGFQGLDHDFRSAEILFNERKQEGVDRDFTFHVDRGKFDRILLEHAGSLGAKVFQGVEIADVEFLSPGNVIVNAKLGKRSVEIKAKMVVDASGRNVLLGRRLGLREKDPVFNQFAIHSWFDNFDRKSATQSPDKVDYIFIHFLPMTNTWVWQIPITETITSVGVVTQKQNYTNSDLTYEEFFWEAVKTRENLHDALKASEQVRPFKKEADYSYGMKEVCGDSFVLIGDAARFVDPIFSSGVSVALNSARIASGDIIEAVKNNDFSKSSFTHYEGMIRNGIKNWYEFITLYYRLNILFTAFVQDPRYRLDILQLLQGDVYSGKRLEVLDKMREIIAAVESDPEHLWHKYLGDMQVPTAKPAF.

Alanine 16, glutamate 35, arginine 41, histidine 43, valine 44, serine 47, arginine 123, isoleucine 147, and aspartate 316 together coordinate FAD. Chloride is bound by residues serine 327 and glycine 328. Residue valine 329 participates in FAD binding.

It belongs to the flavin-dependent halogenase family. Homodimer.

The catalysed reaction is (1H-pyrrole-2-carbonyl)-[peptidyl-carrier protein] + 2 FADH2 + 2 chloride + 2 O2 = (4,5-dichloro-1H-pyrrole-2-carbonyl)-[peptidyl-carrier protein] + 2 FAD + 4 H2O. The enzyme catalyses (1H-pyrrole-2-carbonyl)-[peptidyl-carrier protein] + FADH2 + chloride + O2 = (5-chloro-1H-pyrrole-2-carbonyl)-[peptidyl-carrier protein] + FAD + 2 H2O. It carries out the reaction (5-chloro-1H-pyrrole-2-carbonyl)-[peptidyl-carrier protein] + FADH2 + chloride + O2 = (4,5-dichloro-1H-pyrrole-2-carbonyl)-[peptidyl-carrier protein] + FAD + 2 H2O. It functions in the pathway antibiotic biosynthesis. Functionally, involved in the biosynthesis of the antibiotic pyoluteorin. Catalyzes the dichlorination of the pyrrole ring of pyrrolyl-S-PltL, generating the 5-chloropyrrolyl-S-PltL intermediate and then the 4,5-dichloropyrrolyl-S-PltL product. This Pseudomonas fluorescens (strain ATCC BAA-477 / NRRL B-23932 / Pf-5) protein is 1H-pyrrole-2-carbonyl-[peptidyl-carrier protein] chlorinase.